The chain runs to 376 residues: MKDVPGFLQQSQNSGPGQPAVWHRLEELYTKKLWHQLTLQVLDFVQDPCFAQGDGLIKLYENFISEFEHRVNPLSLVEIILHVVRQMTDPNVALTFLEKTREKVKSSDEAVILCKTAIGALKLNIGDLQVTKETIEDVEEMLNNLPGVTSVHSRFYDLSSKYYQTIGNHASYYKDALRFLGCVDIKDLPVSEQQERAFTLGLAGLLGEGVFNFGELLMHPVLESLRNTDRQWLIDTLYAFNSGNVERFQTLKTAWGQQPDLAANEAQLLRKIQLLCLMEMTFTRPANHRQLTFEEIAKSAKITVNEVELLVMKALSVGLVKGSIDEVDKRVHMTWVQPRVLDLQQIKGMKDRLEFWCTDVKSMEMLVEHQAHDILT.

The region spanning 171–338 (SYYKDALRFL…KRVHMTWVQP (168 aa)) is the PCI domain. Lys-298 carries the post-translational modification N6-acetyllysine.

Belongs to the proteasome subunit S11 family. Component of the 19S proteasome regulatory particle complex. The 26S proteasome consists of a 20S core particle (CP) and two 19S regulatory subunits (RP). The regulatory particle is made of a lid composed of 9 subunits including PSMD13, a base containing 6 ATPases and few additional components.

Its function is as follows. Component of the 26S proteasome, a multiprotein complex involved in the ATP-dependent degradation of ubiquitinated proteins. This complex plays a key role in the maintenance of protein homeostasis by removing misfolded or damaged proteins, which could impair cellular functions, and by removing proteins whose functions are no longer required. Therefore, the proteasome participates in numerous cellular processes, including cell cycle progression, apoptosis, or DNA damage repair. The chain is 26S proteasome non-ATPase regulatory subunit 13 (PSMD13) from Homo sapiens (Human).